Consider the following 567-residue polypeptide: Alpha-glucosidase (567 aa).

The first 17 residues, 1 to 17, serve as a signal peptide directing secretion; that stretch reads MKAVIVFCLMALSIVDA. Asparagine 88 and asparagine 123 each carry an N-linked (GlcNAc...) asparagine glycan. The active-site Nucleophile is aspartate 223. The N-linked (GlcNAc...) asparagine glycan is linked to asparagine 247. Catalysis depends on glutamate 286, which acts as the Proton donor. N-linked (GlcNAc...) asparagine glycans are attached at residues asparagine 290, asparagine 313, asparagine 319, asparagine 499, and asparagine 507.

In terms of assembly, monomer. Expressed specifically in the hypopharyngeal glands of worker bees. Also found in the brain of worker bees (at protein level).

The catalysed reaction is Hydrolysis of terminal, non-reducing (1-&gt;4)-linked alpha-D-glucose residues with release of alpha-D-glucose.. Converts sucrose in nectar to glucose and fructose. In Apis mellifera (Honeybee), this protein is Alpha-glucosidase.